The following is a 348-amino-acid chain: MKKEQKKLTEMTTAGGUAAKIGPEVLASVLSQLPKNDNIENLLVGLDTADDAAVYKLNDDMALIQTLDFFTPMVDDPYVFGQIAASNSLSDVYAMGGKPLVAMNIVCFPSCHDMDVLAEILKGGFDKVKESGALLVGGHTVDDKEPKYGLSVSGIVSPNKVLSNATAKPGDKLIITKPIGVGVLNTAMKEGMVEQHIADKVIEIMIHLNKYAAMSFEKFDVNSVTDITGFGLLGHTLEMAKASEVSIEIESKHVPIIEGAIEMAQMGIIPAGMYKNMHYVSKDVEVVGNIEVAVQDILYDPQTSGGLLISVKEELAEELVKDMKLNGAIEAKIIGSVVPKGEKYITVL.

Residue Sec17 is part of the active site. Residue Sec17 is a non-standard amino acid, selenocysteine. ATP contacts are provided by residues Lys20 and Thr48–Asp50. Asp51 is a Mg(2+) binding site. ATP-binding positions include Asp68, Asp91, and Gly138 to Thr140. Residue Asp91 coordinates Mg(2+). Asp226 serves as a coordination point for Mg(2+).

This sequence belongs to the selenophosphate synthase 1 family. Class I subfamily. As to quaternary structure, homodimer. Mg(2+) serves as cofactor.

It catalyses the reaction hydrogenselenide + ATP + H2O = selenophosphate + AMP + phosphate + 2 H(+). Synthesizes selenophosphate from selenide and ATP. This chain is Selenide, water dikinase, found in Clostridioides difficile (strain 630) (Peptoclostridium difficile).